The primary structure comprises 228 residues: A-type ATP synthase subunit D (228 aa).

Over residues 205–214 (KKEEEEKAEA) the composition is skewed to basic and acidic residues. Residues 205-228 (KKEEEEKAEAAAEAAAVEDPEPAD) are disordered.

The protein belongs to the V-ATPase D subunit family. In terms of assembly, has multiple subunits with at least A(3), B(3), C, D, E, F, H, I and proteolipid K(x).

The protein resides in the cell membrane. Component of the A-type ATP synthase that produces ATP from ADP in the presence of a proton gradient across the membrane. The chain is A-type ATP synthase subunit D from Halorubrum lacusprofundi (strain ATCC 49239 / DSM 5036 / JCM 8891 / ACAM 34).